The sequence spans 336 residues: Homoserine O-acetyltransferase (336 aa).

In terms of domain architecture, AB hydrolase-1 spans 58–321 (AILVLHALTG…PHGHDAFLID (264 aa)). Ser147 (nucleophile) is an active-site residue. Arg204 lines the substrate pocket. Active-site residues include Asp286 and His315. Asp316 contributes to the substrate binding site.

This sequence belongs to the AB hydrolase superfamily. MetX family. Homodimer.

It localises to the cytoplasm. It catalyses the reaction L-homoserine + acetyl-CoA = O-acetyl-L-homoserine + CoA. It participates in amino-acid biosynthesis; L-methionine biosynthesis via de novo pathway; O-acetyl-L-homoserine from L-homoserine: step 1/1. Functionally, transfers an acetyl group from acetyl-CoA to L-homoserine, forming acetyl-L-homoserine. This chain is Homoserine O-acetyltransferase, found in Deinococcus geothermalis (strain DSM 11300 / CIP 105573 / AG-3a).